The following is a 246-amino-acid chain: Small ribosomal subunit protein uS2 (246 aa).

Residues 225 to 246 form a disordered region; the sequence is SKSSASVPNKDEYVAAEDGAAE.

This sequence belongs to the universal ribosomal protein uS2 family.

The sequence is that of Small ribosomal subunit protein uS2 from Cellvibrio japonicus (strain Ueda107) (Pseudomonas fluorescens subsp. cellulosa).